Reading from the N-terminus, the 412-residue chain is Argininosuccinate synthase (412 aa).

Residue 10–18 (AYSGGLDTS) coordinates ATP. An L-citrulline-binding site is contributed by tyrosine 89. Glycine 119 lines the ATP pocket. L-aspartate contacts are provided by threonine 121, asparagine 125, and aspartate 126. Asparagine 125 contacts L-citrulline. The L-citrulline site is built by arginine 129, serine 177, glutamate 261, and tyrosine 273.

Belongs to the argininosuccinate synthase family. Type 1 subfamily. As to quaternary structure, homotetramer.

It localises to the cytoplasm. The catalysed reaction is L-citrulline + L-aspartate + ATP = 2-(N(omega)-L-arginino)succinate + AMP + diphosphate + H(+). The protein operates within amino-acid biosynthesis; L-arginine biosynthesis; L-arginine from L-ornithine and carbamoyl phosphate: step 2/3. The protein is Argininosuccinate synthase of Bifidobacterium longum subsp. infantis (strain ATCC 15697 / DSM 20088 / JCM 1222 / NCTC 11817 / S12).